The sequence spans 337 residues: ATP-dependent 6-phosphofructokinase (337 aa).

Gly-11 contributes to the ATP binding site. ADP is bound at residue 21-25 (RAVVR). Residues 72-73 (RY) and 102-105 (GDGS) each bind ATP. Asp-103 contacts Mg(2+). 125 to 127 (TID) serves as a coordination point for substrate. Asp-127 acts as the Proton acceptor in catalysis. Arg-154 is an ADP binding site. Substrate contacts are provided by residues Arg-162 and 169 to 171 (MGR). Residues 185–187 (GAD), Arg-212, and 214–216 (KNH) each bind ADP. Residues Glu-223, Arg-245, and 251-254 (HILR) contribute to the substrate site.

It belongs to the phosphofructokinase type A (PFKA) family. ATP-dependent PFK group I subfamily. Prokaryotic clade 'B1' sub-subfamily. As to quaternary structure, homotetramer. Mg(2+) is required as a cofactor.

The protein localises to the cytoplasm. The catalysed reaction is beta-D-fructose 6-phosphate + ATP = beta-D-fructose 1,6-bisphosphate + ADP + H(+). The protein operates within carbohydrate degradation; glycolysis; D-glyceraldehyde 3-phosphate and glycerone phosphate from D-glucose: step 3/4. Allosterically activated by ADP and other diphosphonucleosides, and allosterically inhibited by phosphoenolpyruvate. Its function is as follows. Catalyzes the phosphorylation of D-fructose 6-phosphate to fructose 1,6-bisphosphate by ATP, the first committing step of glycolysis. The chain is ATP-dependent 6-phosphofructokinase from Streptococcus equi subsp. equi (strain 4047).